Here is a 163-residue protein sequence, read N- to C-terminus: Phosphopantetheine adenylyltransferase (163 aa).

Thr-10 serves as a coordination point for substrate. Residues Thr-10–Phe-11 and His-18 contribute to the ATP site. Substrate contacts are provided by Lys-42, Leu-75, and Arg-89. ATP contacts are provided by residues Gly-90–Arg-92, Glu-100, and Tyr-125–Ser-131.

This sequence belongs to the bacterial CoaD family. In terms of assembly, homohexamer. Mg(2+) serves as cofactor.

It is found in the cytoplasm. The catalysed reaction is (R)-4'-phosphopantetheine + ATP + H(+) = 3'-dephospho-CoA + diphosphate. Its pathway is cofactor biosynthesis; coenzyme A biosynthesis; CoA from (R)-pantothenate: step 4/5. Functionally, reversibly transfers an adenylyl group from ATP to 4'-phosphopantetheine, yielding dephospho-CoA (dPCoA) and pyrophosphate. In Pelodictyon phaeoclathratiforme (strain DSM 5477 / BU-1), this protein is Phosphopantetheine adenylyltransferase.